The chain runs to 112 residues: Protein lin-52 homolog (112 aa).

The protein belongs to the lin-52 family. Component of the DREAM complex.

In Gallus gallus (Chicken), this protein is Protein lin-52 homolog (LIN52).